Here is a 127-residue protein sequence, read N- to C-terminus: Small ribosomal subunit protein uS13 (127 aa).

Residues 96–118 (LPVRGQRTHTNARTRKGPKRGIV) show a composition bias toward basic residues. Residues 96–127 (LPVRGQRTHTNARTRKGPKRGIVRAKPAAPAR) are disordered.

This sequence belongs to the universal ribosomal protein uS13 family. In terms of assembly, part of the 30S ribosomal subunit. Forms a loose heterodimer with protein S19. Forms two bridges to the 50S subunit in the 70S ribosome.

Functionally, located at the top of the head of the 30S subunit, it contacts several helices of the 16S rRNA. In the 70S ribosome it contacts the 23S rRNA (bridge B1a) and protein L5 of the 50S subunit (bridge B1b), connecting the 2 subunits; these bridges are implicated in subunit movement. Contacts the tRNAs in the A and P-sites. This Myxococcus xanthus (strain DK1622) protein is Small ribosomal subunit protein uS13.